The chain runs to 256 residues: Undecaprenyl-diphosphatase (256 aa).

The next 7 helical transmembrane spans lie at 39-59 (PTDALSCSIFLHTGTMLAVLV), 77-97 (RTVIVATLFTGITGVPLYMLF), 101-121 (FTGGEQATLLIGSLLIATGLM), 135-155 (ISTKDMVLLGLAQGFSILPGV), 176-196 (LMVSFIISVPAVLGAIALDCL), 206-226 (LPGAVMLASSFITGYATMDVL), and 233-253 (VSFSWFCITMGMITLALTALP).

Belongs to the UppP family.

It is found in the cell membrane. It carries out the reaction di-trans,octa-cis-undecaprenyl diphosphate + H2O = di-trans,octa-cis-undecaprenyl phosphate + phosphate + H(+). In terms of biological role, catalyzes the dephosphorylation of undecaprenyl diphosphate (UPP). In Methanothrix thermoacetophila (strain DSM 6194 / JCM 14653 / NBRC 101360 / PT) (Methanosaeta thermophila), this protein is Undecaprenyl-diphosphatase.